Consider the following 188-residue polypeptide: Protein GrpE (188 aa).

Polar residues predominate over residues Met1 to Val10. A disordered region spans residues Met1–Met35. A compositionally biased stretch (low complexity) spans Ala19 to Ala32.

It belongs to the GrpE family. Homodimer.

It is found in the cytoplasm. Functionally, participates actively in the response to hyperosmotic and heat shock by preventing the aggregation of stress-denatured proteins, in association with DnaK and GrpE. It is the nucleotide exchange factor for DnaK and may function as a thermosensor. Unfolded proteins bind initially to DnaJ; upon interaction with the DnaJ-bound protein, DnaK hydrolyzes its bound ATP, resulting in the formation of a stable complex. GrpE releases ADP from DnaK; ATP binding to DnaK triggers the release of the substrate protein, thus completing the reaction cycle. Several rounds of ATP-dependent interactions between DnaJ, DnaK and GrpE are required for fully efficient folding. The sequence is that of Protein GrpE from Azoarcus sp. (strain BH72).